A 118-amino-acid polypeptide reads, in one-letter code: NADH-ubiquinone oxidoreductase chain 3 (118 aa).

3 helical membrane passes run 9-29 (IYLV…FLFA), 62-82 (LVSI…PWAV), and 87-107 (IDLF…IGSL).

This sequence belongs to the complex I subunit 3 family.

It is found in the mitochondrion membrane. The catalysed reaction is a ubiquinone + NADH + 5 H(+)(in) = a ubiquinol + NAD(+) + 4 H(+)(out). In terms of biological role, core subunit of the mitochondrial membrane respiratory chain NADH dehydrogenase (Complex I) that is believed to belong to the minimal assembly required for catalysis. Complex I functions in the transfer of electrons from NADH to the respiratory chain. The immediate electron acceptor for the enzyme is believed to be ubiquinone. In Zea mays (Maize), this protein is NADH-ubiquinone oxidoreductase chain 3 (ND3).